Reading from the N-terminus, the 204-residue chain is Factor arrest protein 3 (204 aa).

In terms of assembly, component of a complex at least composed of FAR3, FAR7, FAR8, FAR10, FAR11 and VPS64.

Its subcellular location is the endoplasmic reticulum. Functionally, participates in the control of the reentry into the cell cycle following pheromone treatment. The chain is Factor arrest protein 3 (FAR3) from Saccharomyces cerevisiae (strain ATCC 204508 / S288c) (Baker's yeast).